Reading from the N-terminus, the 475-residue chain is Aspartyl/glutamyl-tRNA(Asn/Gln) amidotransferase subunit B (475 aa).

It belongs to the GatB/GatE family. GatB subfamily. As to quaternary structure, heterotrimer of A, B and C subunits.

The enzyme catalyses L-glutamyl-tRNA(Gln) + L-glutamine + ATP + H2O = L-glutaminyl-tRNA(Gln) + L-glutamate + ADP + phosphate + H(+). It catalyses the reaction L-aspartyl-tRNA(Asn) + L-glutamine + ATP + H2O = L-asparaginyl-tRNA(Asn) + L-glutamate + ADP + phosphate + 2 H(+). Allows the formation of correctly charged Asn-tRNA(Asn) or Gln-tRNA(Gln) through the transamidation of misacylated Asp-tRNA(Asn) or Glu-tRNA(Gln) in organisms which lack either or both of asparaginyl-tRNA or glutaminyl-tRNA synthetases. The reaction takes place in the presence of glutamine and ATP through an activated phospho-Asp-tRNA(Asn) or phospho-Glu-tRNA(Gln). The chain is Aspartyl/glutamyl-tRNA(Asn/Gln) amidotransferase subunit B from Bacillus cereus (strain ATCC 10987 / NRS 248).